The following is a 312-amino-acid chain: uncharacterized protein (312 aa).

Residues 1-19 (MFSKYLVTASSLFVALTSA) form the signal peptide.

This is an uncharacterized protein from Saccharomyces cerevisiae (strain ATCC 204508 / S288c) (Baker's yeast).